The sequence spans 25 residues: Small ribosomal subunit protein eS32A (25 aa).

Positions 1–25 are disordered; sequence MRDKWRKKRVRRLKRKRRKMRARSK.

Belongs to the eukaryotic ribosomal protein eS32 family. As to quaternary structure, component of the large ribosomal subunit (LSU). Mature yeast ribosomes consist of a small (40S) and a large (60S) subunit. The 40S small subunit contains 1 molecule of ribosomal RNA (18S rRNA) and at least 33 different proteins. The large 60S subunit contains 3 rRNA molecules (25S, 5.8S and 5S rRNA) and at least 46 different proteins.

The protein localises to the cytoplasm. It localises to the nucleus. Functionally, component of the ribosome, a large ribonucleoprotein complex responsible for the synthesis of proteins in the cell. The small ribosomal subunit (SSU) binds messenger RNAs (mRNAs) and translates the encoded message by selecting cognate aminoacyl-transfer RNA (tRNA) molecules. The large subunit (LSU) contains the ribosomal catalytic site termed the peptidyl transferase center (PTC), which catalyzes the formation of peptide bonds, thereby polymerizing the amino acids delivered by tRNAs into a polypeptide chain. The nascent polypeptides leave the ribosome through a tunnel in the LSU and interact with protein factors that function in enzymatic processing, targeting, and the membrane insertion of nascent chains at the exit of the ribosomal tunnel. The sequence is that of Small ribosomal subunit protein eS32A (rpl4101) from Schizosaccharomyces pombe (strain 972 / ATCC 24843) (Fission yeast).